The chain runs to 142 residues: MQHARKKFRVGRTSSHNRCMLANMLKSLIHNERIETTLPKAKELRRHADKMVTLAKKNTLAARRLAVGRLMVRYNTLTGKEARQVKAGDLSAYNVDRRVIGKLFDVLATRFSSRNGGYTRILKLQNRVGDNAQKCIIEFLAD.

It belongs to the bacterial ribosomal protein bL17 family. As to quaternary structure, part of the 50S ribosomal subunit. Contacts protein L32.

The polypeptide is Large ribosomal subunit protein bL17 (Chlamydia muridarum (strain MoPn / Nigg)).